We begin with the raw amino-acid sequence, 240 residues long: uncharacterized protein (240 aa).

The signal sequence occupies residues 1–30; that stretch reads MNKSGMSLIITMLLLIGTAIVIGAAYYAWS.

This is an uncharacterized protein from Methanocaldococcus jannaschii (strain ATCC 43067 / DSM 2661 / JAL-1 / JCM 10045 / NBRC 100440) (Methanococcus jannaschii).